Here is a 629-residue protein sequence, read N- to C-terminus: Translation initiation factor IF-2 (629 aa).

The interval Met-1–Ser-20 is disordered. Residues His-127–Lys-297 enclose the tr-type G domain. Residues Gly-136–Thr-143 are G1. Residue Gly-136–Thr-143 participates in GTP binding. The segment at Gly-161–Ala-165 is G2. Positions Asp-183 to Gly-186 are G3. GTP is bound by residues Asp-183–His-187 and Asn-237–Asp-240. The tract at residues Asn-237 to Asp-240 is G4. Residues Ser-273 to Lys-275 form a G5 region.

Belongs to the TRAFAC class translation factor GTPase superfamily. Classic translation factor GTPase family. IF-2 subfamily.

It is found in the cytoplasm. In terms of biological role, one of the essential components for the initiation of protein synthesis. Protects formylmethionyl-tRNA from spontaneous hydrolysis and promotes its binding to the 30S ribosomal subunits. Also involved in the hydrolysis of GTP during the formation of the 70S ribosomal complex. The sequence is that of Translation initiation factor IF-2 from Mesoplasma florum (strain ATCC 33453 / NBRC 100688 / NCTC 11704 / L1) (Acholeplasma florum).